We begin with the raw amino-acid sequence, 411 residues long: MAYLSRATATLARQDCSNGCSASYAEEEELEASTESYDEEGGSEASTQTFRAKDLIITKADVLKKKPDPSSLVFGASFTDHMLMVEWTSKYGWDKPHIKPFENLSIHPAASVLHYAVELFEGLKAFRGVDNKIRLFRPDLNMKRMCRSAVRTTLPEFDKEELLQCVLQLIQLDREWVPYSTSASLYIRPTFIGIEPSLGVKKPSKALLFVILSPVGSYFSNGTFSPVSLWANPKFVRSWKGGTGDFKMGCNYGSSLLAQCEAAENGCHQVLWLYGKENRITEVGTMNLFLYWINKDGEEELATPPLDGVILPGVTRQSILELGEEWGEFKVCERHITMDDLSTALEENRVKEMFGSGTACVVCPVASILYKGQMLHIPTMENGHKLSSRIMAKLTDIQYGRIKSEWTLELP.

N6-(pyridoxal phosphate)lysine is present on Lys247.

This sequence belongs to the class-IV pyridoxal-phosphate-dependent aminotransferase family. Homodimer. Requires pyridoxal 5'-phosphate as cofactor. Post-translationally, the N-terminus is blocked. As to expression, brain, low expression in ovary and placenta, but not found in liver, kidney, and skeletal muscle.

Its subcellular location is the cytoplasm. The catalysed reaction is L-leucine + 2-oxoglutarate = 4-methyl-2-oxopentanoate + L-glutamate. It catalyses the reaction L-isoleucine + 2-oxoglutarate = (S)-3-methyl-2-oxopentanoate + L-glutamate. The enzyme catalyses L-valine + 2-oxoglutarate = 3-methyl-2-oxobutanoate + L-glutamate. In terms of biological role, catalyzes the first reaction in the catabolism of the essential branched chain amino acids leucine, isoleucine, and valine. This Rattus norvegicus (Rat) protein is Branched-chain-amino-acid aminotransferase, cytosolic (Bcat1).